A 216-amino-acid chain; its full sequence is Large ribosomal subunit protein uL3 (216 aa).

The segment at R134–Q153 is disordered. Q153 carries the post-translational modification N5-methylglutamine.

It belongs to the universal ribosomal protein uL3 family. As to quaternary structure, part of the 50S ribosomal subunit. Forms a cluster with proteins L14 and L19. In terms of processing, methylated by PrmB.

Functionally, one of the primary rRNA binding proteins, it binds directly near the 3'-end of the 23S rRNA, where it nucleates assembly of the 50S subunit. This is Large ribosomal subunit protein uL3 from Cupriavidus pinatubonensis (strain JMP 134 / LMG 1197) (Cupriavidus necator (strain JMP 134)).